Here is a 392-residue protein sequence, read N- to C-terminus: MLAPCSGWELGCFRLCLRQVRLWAGAGRWACWACQARPYSSGGSERWPGSETEVPPPGPGRRTLKEWTLQVSPFGRLRARLPCHLAVRPLDPLTYPDGDRVLVAVCGVEGGVRGLDGLQVKYDEDLEEMAIVSDTIHPQASVEVNAPLKFGLDIKSSGSGCVKVQSIEGDNCKIETEHGTSILQSVKGQKLHVQTKGGKVICLGTVYGNIDIHASDKSAVTIDKLQGSSVTVSTEDGLLKAKYLYTESSFLSSAAGDITLGSVHGNITLQSKMGNITVDSSSGCLKASTNQGAIDVYVSQLGKVELKSHKGSIIVKVPSSLQAHLQLSGKEVDVNSEVHVQEMAEVRKDDVVTVTGLMNQASKREKWIKADAPKGTVSFRRQSWFQSLKLQD.

The disordered stretch occupies residues 39-60 (YSSGGSERWPGSETEVPPPGPG).

This is Protein FAM185A (FAM185A) from Homo sapiens (Human).